Consider the following 428-residue polypeptide: UDP-N-acetylglucosamine 1-carboxyvinyltransferase 2 (428 aa).

22-23 (KN) serves as a coordination point for phosphoenolpyruvate. Residue arginine 92 coordinates UDP-N-acetyl-alpha-D-glucosamine. Cysteine 116 serves as the catalytic Proton donor. Cysteine 116 carries the 2-(S-cysteinyl)pyruvic acid O-phosphothioketal modification. Residues 121–125 (RPIDQ), aspartate 304, and isoleucine 326 each bind UDP-N-acetyl-alpha-D-glucosamine.

Belongs to the EPSP synthase family. MurA subfamily.

Its subcellular location is the cytoplasm. The enzyme catalyses phosphoenolpyruvate + UDP-N-acetyl-alpha-D-glucosamine = UDP-N-acetyl-3-O-(1-carboxyvinyl)-alpha-D-glucosamine + phosphate. It participates in cell wall biogenesis; peptidoglycan biosynthesis. Cell wall formation. Adds enolpyruvyl to UDP-N-acetylglucosamine. This chain is UDP-N-acetylglucosamine 1-carboxyvinyltransferase 2, found in Shouchella clausii (strain KSM-K16) (Alkalihalobacillus clausii).